Consider the following 467-residue polypeptide: Asparagine--tRNA ligase (467 aa).

The protein belongs to the class-II aminoacyl-tRNA synthetase family. As to quaternary structure, homodimer.

It is found in the cytoplasm. The enzyme catalyses tRNA(Asn) + L-asparagine + ATP = L-asparaginyl-tRNA(Asn) + AMP + diphosphate + H(+). The polypeptide is Asparagine--tRNA ligase (Phocaeicola vulgatus (strain ATCC 8482 / DSM 1447 / JCM 5826 / CCUG 4940 / NBRC 14291 / NCTC 11154) (Bacteroides vulgatus)).